Consider the following 2290-residue polypeptide: Protein Ycf2 (2290 aa).

1644-1651 (GSIGTGRS) provides a ligand contact to ATP.

The protein belongs to the Ycf2 family.

The protein resides in the plastid. It localises to the chloroplast stroma. Its function is as follows. Probable ATPase of unknown function. Its presence in a non-photosynthetic plant (Epifagus virginiana) and experiments in tobacco indicate that it has an essential function which is probably not related to photosynthesis. The protein is Protein Ycf2 of Nasturtium officinale (Watercress).